The primary structure comprises 471 residues: Monocarboxylate transporter 4 (471 aa).

Residues Met-1–Asp-17 are Cytoplasmic-facing. Residues Gly-18–Phe-38 form a helical membrane-spanning segment. Residues Pro-39 to Ala-61 are Extracellular-facing. A helical membrane pass occupies residues Trp-62 to Val-82. Topologically, residues Asn-83–Arg-84 are cytoplasmic. A helical membrane pass occupies residues Phe-85–Ala-105. Topologically, residues Ser-106–Arg-109 are extracellular. Residues Ser-110–Phe-130 traverse the membrane as a helical segment. At Gln-131 to Asn-149 the chain is on the cytoplasmic side. The chain crosses the membrane as a helical span at residues Gly-150–Leu-170. The Extracellular portion of the chain corresponds to Gln-171–Gly-179. A helical membrane pass occupies residues Phe-180–Leu-200. At Val-201–Gly-231 the chain is on the cytoplasmic side. A helical transmembrane segment spans residues Phe-232 to Phe-252. The Extracellular portion of the chain corresponds to Val-253–Ala-267. A helical transmembrane segment spans residues Ala-268 to Ile-288. Topologically, residues Thr-289–Ser-298 are cytoplasmic. Residues Val-299–Ala-319 traverse the membrane as a helical segment. The Extracellular segment spans residues Ser-320 to Asp-321. Residues Tyr-322–Leu-342 form a helical membrane-spanning segment. Topologically, residues Gln-343–Lys-355 are cytoplasmic. A helical membrane pass occupies residues Phe-356 to Pro-376. The Extracellular segment spans residues Ser-377–Val-391. A helical transmembrane segment spans residues Phe-392–Phe-412. The Cytoplasmic portion of the chain corresponds to Cys-413–Val-471. Basolateral sorting signal regions lie at residues Ala-429–Arg-447 and Arg-447–Val-471. Ser-430 is modified (phosphoserine). Position 466 is a phosphothreonine (Thr-466). At Ser-470 the chain carries Phosphoserine.

This sequence belongs to the major facilitator superfamily. Monocarboxylate porter (TC 2.A.1.13) family. In terms of assembly, interacts with BSG; interaction mediates SLC16A3 targeting to the plasma membrane. Detected in testis, small intestine, parotid gland, lung and brain. Small amounts are detected in heart, kidney and spleen. Expressed in skeletal muscle.

The protein resides in the cell membrane. It localises to the basolateral cell membrane. It carries out the reaction (S)-lactate(in) + H(+)(in) = (S)-lactate(out) + H(+)(out). It catalyses the reaction pyruvate(out) + H(+)(out) = pyruvate(in) + H(+)(in). Proton-dependent transporter of monocarboxylates such as L-lactate and pyruvate. Plays a predominant role in the L-lactate efflux from highly glycolytic cells. The polypeptide is Monocarboxylate transporter 4 (Slc16a3) (Rattus norvegicus (Rat)).